The primary structure comprises 147 residues: Large ribosomal subunit protein bL9 (147 aa).

Belongs to the bacterial ribosomal protein bL9 family.

Functionally, binds to the 23S rRNA. This is Large ribosomal subunit protein bL9 from Campylobacter jejuni subsp. jejuni serotype O:2 (strain ATCC 700819 / NCTC 11168).